Here is a 257-residue protein sequence, read N- to C-terminus: MGYLKRFALYISVMILIFAIAGCGKGNETKEDSKEEQIKKSFAITLDMYPIKNLEDLYDKEGYRDSEFKKGDKGMWTIYTDFAKSNKPGELDDEGMVLNLDRNTRTAKGHYFVTTFYRNGKLPDEKNYKIEMKNNKIILLDEVKDDKLKQKIENFKFFGQYANLKELRKYNNGDVSINENVPSYDVEYKMSNKDEIVKELRSRYNISTEKSPILKMHIDGDLKGSSVGYRKLEIDFSKRENSKLSVIEFLSYKPAKK.

The N-terminal stretch at 1-22 is a signal peptide; that stretch reads MGYLKRFALYISVMILIFAIAG. Residue C23 is the site of N-palmitoyl cysteine attachment. Residue C23 is the site of S-diacylglycerol cysteine attachment.

This sequence belongs to the staphylococcal tandem lipoprotein family.

Its subcellular location is the cell membrane. This is an uncharacterized protein from Staphylococcus aureus (strain USA300).